We begin with the raw amino-acid sequence, 365 residues long: Histidinol-phosphate aminotransferase (365 aa).

N6-(pyridoxal phosphate)lysine is present on Lys-220.

It belongs to the class-II pyridoxal-phosphate-dependent aminotransferase family. Histidinol-phosphate aminotransferase subfamily. In terms of assembly, homodimer. Requires pyridoxal 5'-phosphate as cofactor.

The catalysed reaction is L-histidinol phosphate + 2-oxoglutarate = 3-(imidazol-4-yl)-2-oxopropyl phosphate + L-glutamate. It functions in the pathway amino-acid biosynthesis; L-histidine biosynthesis; L-histidine from 5-phospho-alpha-D-ribose 1-diphosphate: step 7/9. This Neisseria meningitidis serogroup A / serotype 4A (strain DSM 15465 / Z2491) protein is Histidinol-phosphate aminotransferase.